The primary structure comprises 451 residues: Cysteine desulfurase (451 aa).

Alanine 121, threonine 122, glutamine 229, serine 249, and histidine 251 together coordinate pyridoxal 5'-phosphate. Position 252 is an N6-(pyridoxal phosphate)lysine (lysine 252). Threonine 289 contacts pyridoxal 5'-phosphate. Catalysis depends on cysteine 375, which acts as the Cysteine persulfide intermediate. Cysteine 375 is a binding site for [2Fe-2S] cluster. Cysteine 375 lines the Zn(2+) pocket. Cysteine 375 is subject to Cysteine persulfide.

It belongs to the class-V pyridoxal-phosphate-dependent aminotransferase family. NifS/IscS subfamily. In terms of assembly, homodimer. Component of the mitochondrial core iron-sulfur cluster (ISC) complex composed of NFS1, LYRM4, NDUFAB1, ISCU, FXN, and FDX2; this complex is a heterohexamer containing two copies of each monomer. Component of cyteine desulfurase complex composed of NFS1, LYRM4 and NDUFAB1; this complex contributes to the activation of cysteine desulfurase activity and NFS1 stabilization. Interacts (homodimer form) with ISCU (D-state); each monomer interacts with the C-terminal regions of each NFS1 monomer. Interacts with HSPA9. Interacts (via homodimer form) with FDX2. Interacts (via homodimer form) with FXN. Interacts with LYRM4. Component of a complex composed of FXN, NFS1, LYRM4 and ISCU. Monomer. Homodimer. Oligomer. Interacts with ISCU. Component of the cysteine desulfurase complex composed of NFS1 and LYRM4; this complex contributes to the activation of cysteine desulfurase activity. Interacts with MOCS3. The cofactor is pyridoxal 5'-phosphate. N-gluconoylated. Post-translationally, cysteine persulfide intermediate is reduced by thiol-containing molecules like glutathione and L-cysteine. Persulfide reduction is a rate-limiting step of cysteine desulfurase catalytic cycle.

The protein localises to the mitochondrion. Its subcellular location is the cytoplasm. It localises to the nucleus. It is found in the cytoskeleton. The protein resides in the microtubule organizing center. The protein localises to the centrosome. The enzyme catalyses (sulfur carrier)-H + L-cysteine = (sulfur carrier)-SH + L-alanine. It catalyses the reaction L-cysteinyl-[cysteine desulfurase] + L-cysteine = S-sulfanyl-L-cysteinyl-[cysteine desulfurase] + L-alanine. Active only in complex with LYRM4. Cysteine desulfurase, of the core iron-sulfur cluster (ISC) assembly complex, that catalyzes the desulfuration of L-cysteine to L-alanine, as component of the cysteine desulfurase complex leading to the formation of a cysteine persulfide intermediate at the active site cysteine residue and participates in the [2Fe-2S] clusters assembly on the scaffolding protein ISCU. The persulfide is then transferred on the flexible Cys loop from the catalytic site of NFS1 to the surface of NFS1. After the NFS1-linked persulfide sulfur is transferred to one of the conserved Cys residues of the scaffold, a reaction assisted by FXN. The core iron-sulfur cluster (ISC) assembly complex is involved in the de novo synthesis of a [2Fe-2S] cluster, the first step of the mitochondrial iron-sulfur protein biogenesis. This process is initiated by the cysteine desulfurase complex (NFS1:LYRM4:NDUFAB1) that produces persulfide which is delivered on the scaffold protein ISCU in a FXN-dependent manner. Then this complex is stabilized by FDX2 which provides reducing equivalents to accomplish the [2Fe-2S] cluster assembly. Finally, the [2Fe-2S] cluster is transferred from ISCU to chaperone proteins, including HSCB, HSPA9 and GLRX5. In terms of biological role, may catalyze the desulfuration of L-cysteine to L-alanine as component of the cysteine desulfurase complex (NFS1:LYRM4), leading to the formation of a cysteine persulfide intermediate. Acts as a sulfur donor for MOCS3 by transferring the sulfur of the cysteine persulfide intermediate on MOCS3. The polypeptide is Cysteine desulfurase (Rattus norvegicus (Rat)).